We begin with the raw amino-acid sequence, 347 residues long: S-adenosylmethionine:tRNA ribosyltransferase-isomerase (347 aa).

It belongs to the QueA family. Monomer.

It is found in the cytoplasm. It catalyses the reaction 7-aminomethyl-7-carbaguanosine(34) in tRNA + S-adenosyl-L-methionine = epoxyqueuosine(34) in tRNA + adenine + L-methionine + 2 H(+). Its pathway is tRNA modification; tRNA-queuosine biosynthesis. In terms of biological role, transfers and isomerizes the ribose moiety from AdoMet to the 7-aminomethyl group of 7-deazaguanine (preQ1-tRNA) to give epoxyqueuosine (oQ-tRNA). The protein is S-adenosylmethionine:tRNA ribosyltransferase-isomerase of Bordetella bronchiseptica (strain ATCC BAA-588 / NCTC 13252 / RB50) (Alcaligenes bronchisepticus).